A 270-amino-acid chain; its full sequence is Small ribosomal subunit protein uS3 (270 aa).

The KH type-2 domain occupies Ile-38–Lys-106. A disordered region spans residues Glu-212–Ser-270. Low complexity-rich tracts occupy residues Ala-216–Pro-225 and Gln-245–Ala-263.

This sequence belongs to the universal ribosomal protein uS3 family. Part of the 30S ribosomal subunit. Forms a tight complex with proteins S10 and S14.

Its function is as follows. Binds the lower part of the 30S subunit head. Binds mRNA in the 70S ribosome, positioning it for translation. The polypeptide is Small ribosomal subunit protein uS3 (Thermobifida fusca (strain YX)).